Reading from the N-terminus, the 364-residue chain is Monocarboxylate 2-oxoacid-binding periplasmic protein all3028 (364 aa).

Residues 1-26 (MKRREVLNTAAIATATTALVSCTQTN) form the signal peptide. Residues 103–104 (YY), Q160, and R181 contribute to the substrate site. Q160 lines the Na(+) pocket. 3 residues coordinate Na(+): E218, W219, and E244.

The protein belongs to the bacterial solute-binding protein 7 family. Homodimer. The complex comprises the extracytoplasmic solute receptor protein all3028, and the two putative transmembrane proteins alr3026 and alr3027.

Its subcellular location is the periplasm. Pyruvate uptake inhibited by 2-oxobutyrate, 2-oxovalerate, 2-oxoisovalerate, 2-oxoisocaproate and 2-oxo-3-methylvalerate. In terms of biological role, part of the tripartite ATP-independent periplasmic (TRAP) transport system involved in the uptake of monocarboxylate 2-oxoacids. This protein specifically binds monocarboxylate 2-oxoacids including pyruvate, 2-oxobutyrate, 2-oxovalerate, 2-oxoisovalerate, 2-oxoisocaproate and 2-oxo-3-methylvalerate. Is not able to bind mannitol. In Nostoc sp. (strain PCC 7120 / SAG 25.82 / UTEX 2576), this protein is Monocarboxylate 2-oxoacid-binding periplasmic protein all3028.